Reading from the N-terminus, the 71-residue chain is ATP synthase F(0) complex subunit e, mitochondrial (71 aa).

N6-acetyllysine is present on lysine 34. Residue serine 68 is modified to Phosphoserine.

Belongs to the ATPase e subunit family. As to quaternary structure, component of the ATP synthase complex composed at least of ATP5F1A/subunit alpha, ATP5F1B/subunit beta, ATP5MC1/subunit c (homooctomer), MT-ATP6/subunit a, MT-ATP8/subunit 8, ATP5ME/subunit e, ATP5MF/subunit f, ATP5MG/subunit g, ATP5MK/subunit k, ATP5MJ/subunit j, ATP5F1C/subunit gamma, ATP5F1D/subunit delta, ATP5F1E/subunit epsilon, ATP5PF/subunit F6, ATP5PB/subunit b, ATP5PD/subunit d, ATP5PO/subunit OSCP. ATP synthase complex consists of a soluble F(1) head domain (subunits alpha(3) and beta(3)) - the catalytic core - and a membrane F(0) domain - the membrane proton channel (subunits c, a, 8, e, f, g, k and j). These two domains are linked by a central stalk (subunits gamma, delta, and epsilon) rotating inside the F1 region and a stationary peripheral stalk (subunits F6, b, d, and OSCP).

The protein localises to the mitochondrion. It is found in the mitochondrion inner membrane. Its function is as follows. Subunit e, of the mitochondrial membrane ATP synthase complex (F(1)F(0) ATP synthase or Complex V) that produces ATP from ADP in the presence of a proton gradient across the membrane which is generated by electron transport complexes of the respiratory chain. ATP synthase complex consist of a soluble F(1) head domain - the catalytic core - and a membrane F(1) domain - the membrane proton channel. These two domains are linked by a central stalk rotating inside the F(1) region and a stationary peripheral stalk. During catalysis, ATP synthesis in the catalytic domain of F(1) is coupled via a rotary mechanism of the central stalk subunits to proton translocation. In vivo, can only synthesize ATP although its ATP hydrolase activity can be activated artificially in vitro. Part of the complex F(0) domain. The chain is ATP synthase F(0) complex subunit e, mitochondrial from Pongo abelii (Sumatran orangutan).